A 348-amino-acid polypeptide reads, in one-letter code: Phosphate acyltransferase (348 aa).

This sequence belongs to the PlsX family. As to quaternary structure, homodimer. Probably interacts with PlsY.

The protein resides in the cytoplasm. It catalyses the reaction a fatty acyl-[ACP] + phosphate = an acyl phosphate + holo-[ACP]. It participates in lipid metabolism; phospholipid metabolism. Catalyzes the reversible formation of acyl-phosphate (acyl-PO(4)) from acyl-[acyl-carrier-protein] (acyl-ACP). This enzyme utilizes acyl-ACP as fatty acyl donor, but not acyl-CoA. The sequence is that of Phosphate acyltransferase from Nitrosomonas europaea (strain ATCC 19718 / CIP 103999 / KCTC 2705 / NBRC 14298).